The primary structure comprises 512 residues: Cytochrome P450 monooxygenase paxQ (512 aa).

2 consecutive transmembrane segments (helical) span residues 3-23 and 35-55; these read FVLS…LVSI and LQIP…ISAL. Residue Cys453 coordinates heme.

Belongs to the cytochrome P450 family. Heme serves as cofactor.

It localises to the membrane. It functions in the pathway secondary metabolite biosynthesis. Functionally, cytochrome P450 monooxygenase; part of the gene cluster that mediates the biosynthesis of paxilline, a mycotoxin that acts as an inhibitor of mammalian maxi-K channels. PaxG, the geranylgeranyl diphosphate (GGPP) synthase is proposed to catalyze the first step in paxilline biosynthesis. Condensation of indole-3-glycerol phosphate with GGPP by paxC then forms 3-geranylgeranylindole (3-GGI), followed by epoxidation and cyclization of this intermediate (by paxM and paxB) to form paspaline. Paspaline is subsequently converted to 13-desoxypaxilline by paxP, the latter being then converted to paxilline by paxQ. Finally paxilline can be mono- and di-prenylated by paxD. PaxQ can also utilized beta-paxitriol and alpha-PC-M6 as substrates converting them to alpha-paxitriol. This Penicillium paxilli protein is Cytochrome P450 monooxygenase paxQ.